Reading from the N-terminus, the 165-residue chain is uncharacterized protein (165 aa).

Residues glutamine 22–aspartate 34 show a composition bias toward polar residues. Positions glutamine 22 to glutamine 45 are disordered.

This is an uncharacterized protein from Homo sapiens (Human).